The sequence spans 546 residues: Chaperonin GroEL (546 aa).

ATP-binding positions include 30-33 (TLGP), Lys-51, 87-91 (DGTTT), Gly-415, 479-481 (NAA), and Asp-495. The tract at residues 526-546 (KEDAPMPGGMPGGMGGMGMDM) is disordered. The segment covering 534-546 (GMPGGMGGMGMDM) has biased composition (gly residues).

This sequence belongs to the chaperonin (HSP60) family. As to quaternary structure, forms a cylinder of 14 subunits composed of two heptameric rings stacked back-to-back. Interacts with the co-chaperonin GroES.

It is found in the cytoplasm. It catalyses the reaction ATP + H2O + a folded polypeptide = ADP + phosphate + an unfolded polypeptide.. Together with its co-chaperonin GroES, plays an essential role in assisting protein folding. The GroEL-GroES system forms a nano-cage that allows encapsulation of the non-native substrate proteins and provides a physical environment optimized to promote and accelerate protein folding. The sequence is that of Chaperonin GroEL from Burkholderia thailandensis.